Consider the following 188-residue polypeptide: Phosphoribosylglycinamide formyltransferase (188 aa).

12–14 (GSN) contributes to the N(1)-(5-phospho-beta-D-ribosyl)glycinamide binding site. (6R)-10-formyltetrahydrofolate-binding positions include lysine 66, 91–94 (MRLI), and asparagine 108. Histidine 110 functions as the Proton donor in the catalytic mechanism.

This sequence belongs to the GART family.

The enzyme catalyses N(1)-(5-phospho-beta-D-ribosyl)glycinamide + (6R)-10-formyltetrahydrofolate = N(2)-formyl-N(1)-(5-phospho-beta-D-ribosyl)glycinamide + (6S)-5,6,7,8-tetrahydrofolate + H(+). It participates in purine metabolism; IMP biosynthesis via de novo pathway; N(2)-formyl-N(1)-(5-phospho-D-ribosyl)glycinamide from N(1)-(5-phospho-D-ribosyl)glycinamide (10-formyl THF route): step 1/1. In terms of biological role, catalyzes the transfer of a formyl group from 10-formyltetrahydrofolate to 5-phospho-ribosyl-glycinamide (GAR), producing 5-phospho-ribosyl-N-formylglycinamide (FGAR) and tetrahydrofolate. The polypeptide is Phosphoribosylglycinamide formyltransferase (Staphylococcus aureus (strain MSSA476)).